The chain runs to 199 residues: dITP/XTP pyrophosphatase (199 aa).

Residue 8–13 coordinates substrate; that stretch reads SGNAGK. Aspartate 69 functions as the Proton acceptor in the catalytic mechanism. Aspartate 69 contacts Mg(2+). Substrate is bound by residues serine 70, 154–157, lysine 177, and 182–183; these read FGYN and HR.

It belongs to the HAM1 NTPase family. Homodimer. Mg(2+) serves as cofactor.

The catalysed reaction is XTP + H2O = XMP + diphosphate + H(+). The enzyme catalyses dITP + H2O = dIMP + diphosphate + H(+). It carries out the reaction ITP + H2O = IMP + diphosphate + H(+). Its function is as follows. Pyrophosphatase that catalyzes the hydrolysis of nucleoside triphosphates to their monophosphate derivatives, with a high preference for the non-canonical purine nucleotides XTP (xanthosine triphosphate), dITP (deoxyinosine triphosphate) and ITP. Seems to function as a house-cleaning enzyme that removes non-canonical purine nucleotides from the nucleotide pool, thus preventing their incorporation into DNA/RNA and avoiding chromosomal lesions. This Xanthomonas axonopodis pv. citri (strain 306) protein is dITP/XTP pyrophosphatase.